Consider the following 1088-residue polypeptide: RNA-directed RNA polymerase (1088 aa).

In terms of domain architecture, RdRp catalytic spans 501-687 (LSYGDVTRFL…AKRYIAGGKI (187 aa)).

Belongs to the reoviridae RNA-directed RNA polymerase family. As to quaternary structure, interacts with VP3 (Potential). Interacts with VP2; this interaction activates VP1. Interacts with NSP5; this interaction is probably necessary for the formation of functional virus factories. Interacts with NSP2; this interaction is weak. The cofactor is Mg(2+).

Its subcellular location is the virion. The enzyme catalyses RNA(n) + a ribonucleoside 5'-triphosphate = RNA(n+1) + diphosphate. Functionally, RNA-directed RNA polymerase that is involved in both transcription and genome replication. Together with VP3 capping enzyme, forms an enzyme complex positioned near the channels situated at each of the five-fold vertices of the core. Following infection, the outermost layer of the virus is lost, leaving a double-layered particle (DLP) made up of the core and VP6 shell. VP1 then catalyzes the transcription of fully conservative plus-strand genomic RNAs that are extruded through the DLP's channels into the cytoplasm where they function as mRNAs for translation of viral proteins. One copy of each of the viral (+)RNAs is also recruited during core assembly, together with newly synthesized polymerase complexes and VP2. The polymerase of these novo-formed particles catalyzes the synthesis of complementary minus-strands leading to dsRNA formation. To do so, the polymerase specifically recognizes and binds 4 bases 5'-UGUG-3' in the conserved 3'-sequence of plus-strand RNA templates. VP2 presumably activates the autoinhibited VP1-RNA complex to coordinate packaging and genome replication. Once dsRNA synthesis is complete, the polymerase switches to the transcriptional mode, thus providing secondary transcription. The protein is RNA-directed RNA polymerase of Chlorocebus pygerythrus (Vervet monkey).